We begin with the raw amino-acid sequence, 567 residues long: Myo-inositol transporter 1 (567 aa).

Over 1–88 (MSARPAQPNI…KFVWMLVSAA (88 aa)) the chain is Cytoplasmic. The tract at residues 14–42 (IRTSLSGYPSPTHSGSSTPASLEFSDGRL) is disordered. Polar residues predominate over residues 16 to 33 (TSLSGYPSPTHSGSSTPA). A helical membrane pass occupies residues 89–109 (AISGLLFGYDTAAISGMLVII). Residues 110 to 123 (KDDLGTILSSWQKE) are Extracellular-facing. Residues 124–144 (VITSATTLGALLGGLAAGCVS) traverse the membrane as a helical segment. Residues 145-150 (DFTGRR) are Cytoplasmic-facing. Residues 151–171 (LVIVFANVAFIGGSICQAACH) form a helical membrane-spanning segment. Over 172–180 (TVAAMIAGR) the chain is Extracellular. A helical transmembrane segment spans residues 181–201 (FIVGLGVGLASCIVPLYIGEL). Residues 202–209 (APTMIRGR) lie on the Cytoplasmic side of the membrane. Residues 210 to 230 (LVTINCVAVTLGQVVAYAIGA) form a helical membrane-spanning segment. The Extracellular segment spans residues 231-240 (SFQNVHNGWR). Residues 241 to 261 (WIVGLGAMPSFVQLAAIGFLP) traverse the membrane as a helical segment. Over 262-343 (ESPRILLLRS…IGCGLQAAQQ (82 aa)) the chain is Cytoplasmic. The helical transmembrane segment at 344 to 364 (LCGFNTLMYYSATIFAMLGFN) threads the bilayer. N-linked (GlcNAc...) asparagine glycosylation is present at Asn-365. Residues 365–367 (NAT) are Extracellular-facing. The helical transmembrane segment at 368 to 388 (AVGLIVATVNVLFTLVALKIV) threads the bilayer. Topologically, residues 389–397 (DPVGRRRTM) are cytoplasmic. Residues 398–418 (LFTLPIMILALVFAAIFFYYL) form a helical membrane-spanning segment. Residues 419–435 (TLSTNGILIEDHDYPRS) lie on the Extracellular side of the membrane. The chain crosses the membrane as a helical span at residues 436–456 (LSILVLLSMLLYVAGYATGLG). Residues 457 to 476 (NIPWQQGELFRLEVRGIGTS) are Cytoplasmic-facing. A helical membrane pass occupies residues 477 to 497 (ICTAVNWSCNMLIAGTFLSLM). At 498 to 503 (DAATPS) the chain is on the extracellular side. A helical transmembrane segment spans residues 504 to 524 (GAFGIYAGFCVIGWVFCWMLY). Residues 525–567 (PETSGLSLEEVYFVFEEGFGIKKSQQLRKQKLVEAAKLKAIFE) are Cytoplasmic-facing.

The protein belongs to the major facilitator superfamily. Sugar transporter (TC 2.A.1.1) family.

The protein resides in the cell membrane. It carries out the reaction myo-inositol(out) + H(+)(out) = myo-inositol(in) + H(+)(in). In terms of biological role, may function as a transporter or as a sensor for myo-inositol. This is Myo-inositol transporter 1 from Cryptococcus neoformans var. grubii serotype A (strain H99 / ATCC 208821 / CBS 10515 / FGSC 9487) (Filobasidiella neoformans var. grubii).